A 414-amino-acid chain; its full sequence is Putative competence-damage inducible protein (414 aa).

This sequence belongs to the CinA family.

The protein is Putative competence-damage inducible protein of Listeria monocytogenes serotype 4a (strain HCC23).